A 318-amino-acid chain; its full sequence is L-lactate dehydrogenase 1 (318 aa).

NAD(+) is bound by residues valine 17, aspartate 38, lysine 43, tyrosine 69, and glycine 83 to alanine 84. Residues glutamine 86, arginine 92, and asparagine 124–aspartate 127 contribute to the substrate site. NAD(+)-binding positions include alanine 122–asparagine 124 and serine 147. A substrate-binding site is contributed by aspartate 152–arginine 155. The beta-D-fructose 1,6-bisphosphate site is built by arginine 157 and histidine 172. Histidine 179 (proton acceptor) is an active-site residue. Phosphotyrosine is present on tyrosine 224. Threonine 233 serves as a coordination point for substrate.

It belongs to the LDH/MDH superfamily. LDH family. In terms of assembly, homotetramer.

It is found in the cytoplasm. The catalysed reaction is (S)-lactate + NAD(+) = pyruvate + NADH + H(+). It participates in fermentation; pyruvate fermentation to lactate; (S)-lactate from pyruvate: step 1/1. Its activity is regulated as follows. Allosterically activated by fructose 1,6-bisphosphate (FBP). In terms of biological role, catalyzes the conversion of lactate to pyruvate. This Peribacillus psychrosaccharolyticus (Bacillus psychrosaccharolyticus) protein is L-lactate dehydrogenase 1.